The following is a 1052-amino-acid chain: N-acetyltransferase eco (1052 aa).

4 disordered regions span residues 1–45 (METP…DADV), 61–277 (RKGR…SADI), 290–405 (ENMR…RKVT), and 419–452 (SGEA…PLLG). The segment covering 99–113 (TAEQLPQLFTATMRL) has biased composition (polar residues). Composition is skewed to low complexity over residues 114-125 (NSNSSSNSRNSS) and 138-153 (SSMS…TPSS). Residues Ser176 and Ser177 each carry the phosphoserine modification. Basic and acidic residues predominate over residues 290-309 (ENMRSYDEEKTAAVKLENSR). Phosphoserine occurs at positions 310, 312, and 314. Composition is skewed to polar residues over residues 329-343 (NTGN…SSEV), 395-405 (GSPQSKMRKVT), and 432-447 (ISKN…SPTS). Residues 852–876 (RQCQQCGLVYTVHEPEEELLHREYH) form a CCHH-type zinc finger. An N-acetyltransferase domain is found at 906–1052 (IRINERAPTA…GLDNFLTYDQ (147 aa)).

This sequence belongs to the acetyltransferase family. ECO subfamily.

Its subcellular location is the nucleus. Its function is as follows. Acetyltransferase required for the establishment of sister chromatid cohesion and couple the processes of cohesion and DNA replication to ensure that only sister chromatids become paired together. In contrast to the structural cohesins, the deposition and establishment factors are required only during S phase. In Drosophila melanogaster (Fruit fly), this protein is N-acetyltransferase eco (eco).